A 155-amino-acid chain; its full sequence is Snaclec clone 2100755 (155 aa).

The signal sequence occupies residues 1–23 (MGRFIFVSFGLLVVFLSLSGTAA). 3 cysteine pairs are disulfide-bonded: C25-C36, C53-C144, and C119-C136. A C-type lectin domain is found at 32–145 (YDGHCYQVFS…CEKSVSFVCK (114 aa)).

The protein belongs to the snaclec family. Heterodimer; disulfide-linked.

It localises to the secreted. Interferes with one step of hemostasis (modulation of platelet aggregation, or coagulation cascade, for example). This is Snaclec clone 2100755 from Deinagkistrodon acutus (Hundred-pace snake).